The following is a 427-amino-acid chain: MTEAMKITLSTQPADARWGEKATYSINNDGITLHLNGADDLGLIQRAARKIDGLGIKHVQLSGEGWDADRCWAFWQGYKAPKGTRKVEWPDLDDAQRQELDNRLMIIDWVRDTINAPAEELGPSQLAQRAVDLISNVAGDRVTYRITKGEDLREQGYMGLHTVGRGSERSPVLLALDYNPTGDKEAPVYACLVGKGITFDSGGYSIKQTAFMDSMKSDMGGAATVTGALAFAITRGLNKRVKLFLCCADNLISGNAFKLGDIITYRNGKKVEVMNTDAEGRLVLADGLIDASAQKPELIIDAATLTGAAKTALGNDYHALFSFDDALAGRLLASASQENEPFWRLPLAEFHRSQLPSNFAELNNTGSAAYPAGASTAAGFLSHFVENYQQGWLHIDCSATYRKAPVEQWSAGATGLGVRTIANLLTA.

Residues Lys195 and Asp200 each contribute to the Mn(2+) site. The active site involves Lys207. Mn(2+) contacts are provided by Asp218, Asp277, and Glu279. Residue Arg281 is part of the active site.

Belongs to the peptidase M17 family. In terms of assembly, homohexamer. Mn(2+) serves as cofactor.

The protein resides in the cytoplasm. The catalysed reaction is Release of an N-terminal amino acid, Xaa, from a peptide or arylamide. Xaa is preferably Glu or Asp but may be other amino acids, including Leu, Met, His, Cys and Gln.. Functionally, probably plays an important role in intracellular peptide degradation. The protein is Peptidase B of Escherichia coli O139:H28 (strain E24377A / ETEC).